A 157-amino-acid polypeptide reads, in one-letter code: RNA pyrophosphohydrolase (157 aa).

In terms of domain architecture, Nudix hydrolase spans 6–149; sequence SYRPNVAAVI…KRKVYRRVID (144 aa). Residues 43 to 64 carry the Nudix box motif; it reads GGIDEGETPEDALYRELLEEIG.

The protein belongs to the Nudix hydrolase family. RppH subfamily. The cofactor is a divalent metal cation.

In terms of biological role, accelerates the degradation of transcripts by removing pyrophosphate from the 5'-end of triphosphorylated RNA, leading to a more labile monophosphorylated state that can stimulate subsequent ribonuclease cleavage. In Sulfurovum sp. (strain NBC37-1), this protein is RNA pyrophosphohydrolase.